Consider the following 217-residue polypeptide: Small ribosomal subunit protein uS3c (217 aa).

The KH type-2 domain occupies 39 to 109 (IRSCIEKQLH…QIRINLIEIT (71 aa)).

It belongs to the universal ribosomal protein uS3 family. Part of the 30S ribosomal subunit.

The protein localises to the plastid. Its subcellular location is the chloroplast. This Gracilaria tenuistipitata var. liui (Red alga) protein is Small ribosomal subunit protein uS3c (rps3).